A 521-amino-acid polypeptide reads, in one-letter code: Cell adhesion molecule CEACAM1 (521 aa).

A signal peptide spans 1 to 34; it reads MELASAHLHKGQVPWGGLLLTASLLASWSPATTA. Residues 35-142 form the Ig-like V-type domain; it reads EVTIEAVPPQ…QATVRFHVHP (108 aa). The Extracellular portion of the chain corresponds to 35–428; that stretch reads EVTIEAVPPQ…GGLSDGAIAG (394 aa). Residues 39–142 are required for homophilic binding; that stretch reads EAVPPQVAED…QATVRFHVHP (104 aa). N-linked (GlcNAc...) asparagine glycans are attached at residues Asn-71, Asn-89, Asn-104, Asn-148, Asn-152, Asn-199, Asn-206, Asn-210, Asn-226, Asn-258, Asn-290, Asn-294, Asn-304, Asn-317, Asn-333, and Asn-375. Ig-like C2-type domains are found at residues 147–234, 239–319, and 323–411; these read PNIT…FSLN, PDTP…KNIT, and PVTQ…IKLD. Cys-167 and Cys-217 are oxidised to a cystine. Cys-261 and Cys-301 form a disulfide bridge. Residues Cys-346 and Cys-394 are joined by a disulfide bond. Residues 429–447 traverse the membrane as a helical segment; it reads IVIGVVAGVALIAGLAYFL. The segment at 445–457 is interaction with calmodulin; it reads YFLYSRKSGGGSD. An interaction with FLNA region spans residues 447-521; it reads LYSRKSGGGS…ETVYSEVKKK (75 aa). Over 448–521 the chain is Cytoplasmic; that stretch reads YSRKSGGGSD…ETVYSEVKKK (74 aa). The tract at residues 455–521 is disordered; the sequence is GSDQRDLTEH…ETVYSEVKKK (67 aa). Over residues 457-466 the composition is skewed to basic and acidic residues; sequence DQRDLTEHKP. Polar residues predominate over residues 467–481; it reads STSNHNLAPSDNSPN. Positions 484–521 are required for interaction with PTPN11 and PTPN6 and for control of phosphorylation level; it reads DDVAYTVLNFNSQQPNRPTSAPSSPRATETVYSEVKKK. Tyr-488 carries the phosphotyrosine; by SRC, LCK, INSR and EGFR modification. Positions 491–514 are enriched in polar residues; the sequence is LNFNSQQPNRPTSAPSSPRATETV. Ser-503 is subject to Phosphoserine. Tyr-515 carries the post-translational modification Phosphotyrosine; by INSR, SRC and LCK. The interval 515–518 is essential for interaction with PTPN11 and PTPN6; it reads YSEV.

Belongs to the immunoglobulin superfamily. CEA family. In terms of assembly, (Microbial infection) Interacts with MHV S1 spike glycoprotein. Monomer. Oligomer. Heterodimer. Homodimer. Cis-dimer/oligomer (via Ig-like C2-type and/or via cytoplasmic domains); induced by trans-homophilic cell adhesion through an allosteric mechanism transmitted by the Ig-like V-type domain, and is regulated by intracellular calcium and calmodulin. Interacts (via cytoplasmic domain) with calmodulin in a calcium dependent manner; reduces homophilic cell adhesion through dissociation of dimer. Isoform 1 interacts (via cytoplasmic domain) with PTPN11 (preferentially) and PTPN6; cis-homodimer form is preferred; this interaction is decreased by formation of isoform 1 / isoform 2 cis-heterodimers and is dependent on the monomer/dimer equilibrium; this interaction is phosphorylation-dependent. Isoform 1 interacts with LYN. Isoform 1 interacts (via cytoplasmic domain) with SRC (via SH2 domain); this interaction is regulated by trans-homophilic cell adhesion. Isoform 1 interacts with LCK; mediates phosphorylation at Tyr-488 and Tyr-515 resulting in PTPN6 association. Isoform 1 interacts with PTPN6; this interaction is phosphorylation-dependent and causes a profound decrease in TCR stimulation-induced CD247 and ZAP70 phosphorylation. Isoform 1 interacts with TCR/CD3 complex through TCR beta chain and CD3E; colocalizes at the cell surface and upon stimulation of the TCR/CD3 complex recruits PTPN6 in the TCR/CD3 complex, resulting in dephosphorylation of CD247 and ZAP70. Isoform 1 interacts (via cytoplasmic domain) with SHC1 (via SH2 domain); SHC1 mediates interaction with INSR or EGFR in a Ser-503 phosphorylation-dependent manner. Isoform 1 interacts with EGFR; the interaction is indirect. Isoform 1 interacts with CSF3R; down-regulates the CSF3R-STAT3 pathway through recruitment of PTPN6 that dephosphorylates CSF3R. Isoform 1 (phosphorylated form) interacts with TLR4 and SYK; recruits PTPN6 that dephosphorylates SYK, reducing the production of reactive oxygen species (ROS) and lysosome disruption, leading to a reduction of the inflammasome activity. Isoform 1 interacts with FLNA; inhibits cell migration and cell scattering by interfering with the interaction of FLNA with RALA. Isoform 1 interacts (via cytoplasmic domain) with PXN; the interaction is phosphotyrosyl-dependent. Isoform 1 interacts with KLRK1; recruits PTPN6 that dephosphorylates VAV1. Isoform 1 interacts with CEACAM8. Isoform 1 interacts with FASN; this interaction is insulin and phosphorylation-dependent; reduces fatty-acid synthase activity. Interacts (via Ig-like V-type) with HAVCR2 (via Ig-like V-type); facilitates the maturation and cell surface expression of HAVCR2 thereby regulating T-cell tolerance induction. Isoform 2 interacts (via the cytoplasmic domain) with ANXA2; this interaction is regulated by phosphorylation and appears in the AIIt complex. Interacts (via Lewis X moieties) with CD209 (via C-type lectin domain); this interaction is regulated by the glycosylation pattern of CEACAM1 on cell types and regulates contact between dendritic cells and neutrophils. Phosphorylated on serine and tyrosine. Isoform 1 is phosphorylated on tyrosine by Src family kinases like SRC and LCK and by receptor like CSF3R, EGFR and INSR upon stimulation. Phosphorylated at Ser-503; mediates activity. Phosphorylated at Tyr-488; regulates activity. Phosphorylated at Tyr-488 by EGFR and INSR upon stimulation; this phosphorylation is Ser-503-phosphorylation-dependent; mediates cellular internalization; increases interaction with FASN. Phosphorylated at Tyr-488 and Tyr-515 by LCK; mediates PTPN6 association and is regulated by homophilic ligation of CEACAM1 in the absence of T-cell activation. Phosphorylated at Tyr-515; mediates interaction with PTPN11. Post-translationally, phosphorylated on serine and threonine. As to expression, expressed in granulocytes, lymphocytes, granulocytes, B cells, and T-cells. Expressed in bone. Highly expressed in liver and femur. Highly expressed in neutrophils, and to a lesser extent inmonocytes, and macrophages. Slightly higher expressed in peripheral blood neutrophils (PBNs). Intestinal T-cells predominantly express isoform 2 while extraintestinal T-cells mainly express isoform 1. Expressed in small intestine and colon.

The protein resides in the cell membrane. It localises to the lateral cell membrane. The protein localises to the apical cell membrane. Its subcellular location is the basal cell membrane. It is found in the cell junction. The protein resides in the adherens junction. It localises to the cytoplasmic vesicle. The protein localises to the secretory vesicle. Its subcellular location is the cell projection. It is found in the microvillus membrane. Its function is as follows. Cell adhesion protein that mediates homophilic cell adhesion in a calcium-independent manner. Plays a role as coinhibitory receptor in immune response, insulin action and also functions as an activator during angiogenesis. Its coinhibitory receptor function is phosphorylation- and PTPN6 -dependent, which in turn, suppress signal transduction of associated receptors by dephosphorylation of their downstream effectors. Plays a role in immune response, of T-cells, natural killer (NK) and neutrophils. Upon TCR/CD3 complex stimulation, inhibits TCR-mediated cytotoxicity by blocking granule exocytosis by mediating homophilic binding to adjacent cells, allowing interaction with and phosphorylation by LCK and interaction with the TCR/CD3 complex which recruits PTPN6 resulting in dephosphorylation of CD247 and ZAP70. Also inhibits T-cell proliferation and cytokine production through inhibition of JNK cascade and plays a crucial role in regulating autoimmunity and anti-tumor immunity by inhibiting T-cell through its interaction with HAVCR2. Upon natural killer (NK) cells activation, inhibit KLRK1-mediated cytolysis of CEACAM1-bearing tumor cells by trans-homophilic interactions with CEACAM1 on the target cell and lead to cis-interaction between CEACAM1 and KLRK1, allowing PTPN6 recruitment and then VAV1 dephosphorylation. Upon neutrophils activation negatively regulates IL1B production by recruiting PTPN6 to a SYK-TLR4-CEACAM1 complex, that dephosphorylates SYK, reducing the production of reactive oxygen species (ROS) and lysosome disruption, which in turn, reduces the activity of the inflammasome. Down-regulates neutrophil production by acting as a coinhibitory receptor for CSF3R by downregulating the CSF3R-STAT3 pathway through recruitment of PTPN6 that dephosphorylates CSF3R. Also regulates insulin action by promoting INS clearance and regulating lipogenesis in liver through regulating insulin signaling. Upon INS stimulation, undergoes phosphorylation by INSR leading to INS clearance by increasing receptor-mediated insulin endocytosis. This inernalization promotes interaction with FASN leading to receptor-mediated insulin degradation and to reduction of FASN activity leading to negative regulation of fatty acid synthesis. INSR-mediated phosphorylation also provokes a down-regulation of cell proliferation through SHC1 interaction resulting in decrease coupling of SHC1 to the MAPK3/ERK1-MAPK1/ERK2 and phosphatidylinositol 3-kinase pathways. Functions as activator in angiogenesis by promoting blood vessel remodeling through endothelial cell differentiation and migration and in arteriogenesis by increasing the number of collateral arteries and collateral vessel calibers after ischemia. Also regulates vascular permeability through the VEGFR2 signaling pathway resulting in control of nitric oxide production. Down-regulates cell growth in response to EGF through its interaction with SHC1 that mediates interaction with EGFR resulting in decrease coupling of SHC1 to the MAPK3/ERK1-MAPK1/ERK2 pathway. Negatively regulates platelet aggregation by decreasing platelet adhesion on type I collagen through the GPVI-FcRgamma complex. Inhibits cell migration and cell scattering through interaction with FLNA; interferes with the interaction of FLNA with RALA. Mediates bile acid transport activity in a phosphorylation dependent manner. Negatively regulates osteoclastogenesis. Cell adhesion protein that mediates homophilic cell adhesion in a calcium-independent manner. Promotes populations of T-cells regulating IgA production and secretion associated with control of the commensal microbiota and resistance to enteropathogens. In terms of biological role, (Microbial infection) In case of murine coronavirus (MHV) infection, serves as receptor for MHV S1 spike glycoprotein. This chain is Cell adhesion molecule CEACAM1, found in Mus musculus (Mouse).